Consider the following 335-residue polypeptide: Anthranilate phosphoribosyltransferase (335 aa).

Residues glycine 79, 82-83 (GD), threonine 87, 89-92 (NIST), 107-115 (KHGSRSVSS), and serine 119 contribute to the 5-phospho-alpha-D-ribose 1-diphosphate site. Glycine 79 provides a ligand contact to anthranilate. Serine 91 lines the Mg(2+) pocket. An anthranilate-binding site is contributed by arginine 165. Residues aspartate 223 and glutamate 224 each coordinate Mg(2+).

It belongs to the anthranilate phosphoribosyltransferase family. Homodimer. It depends on Mg(2+) as a cofactor.

It carries out the reaction N-(5-phospho-beta-D-ribosyl)anthranilate + diphosphate = 5-phospho-alpha-D-ribose 1-diphosphate + anthranilate. The protein operates within amino-acid biosynthesis; L-tryptophan biosynthesis; L-tryptophan from chorismate: step 2/5. In terms of biological role, catalyzes the transfer of the phosphoribosyl group of 5-phosphorylribose-1-pyrophosphate (PRPP) to anthranilate to yield N-(5'-phosphoribosyl)-anthranilate (PRA). This Helicobacter pylori (strain G27) protein is Anthranilate phosphoribosyltransferase.